Reading from the N-terminus, the 103-residue chain is Small ribosomal subunit protein uS14c (103 aa).

This sequence belongs to the universal ribosomal protein uS14 family. In terms of assembly, part of the 30S ribosomal subunit.

The protein localises to the plastid. It localises to the chloroplast. Its function is as follows. Binds 16S rRNA, required for the assembly of 30S particles. The protein is Small ribosomal subunit protein uS14c of Lolium perenne (Perennial ryegrass).